We begin with the raw amino-acid sequence, 268 residues long: Ribosomal RNA small subunit methyltransferase A (268 aa).

6 residues coordinate S-adenosyl-L-methionine: N23, I25, G50, E72, D97, and N116.

The protein belongs to the class I-like SAM-binding methyltransferase superfamily. rRNA adenine N(6)-methyltransferase family. RsmA subfamily.

It is found in the cytoplasm. The enzyme catalyses adenosine(1518)/adenosine(1519) in 16S rRNA + 4 S-adenosyl-L-methionine = N(6)-dimethyladenosine(1518)/N(6)-dimethyladenosine(1519) in 16S rRNA + 4 S-adenosyl-L-homocysteine + 4 H(+). Functionally, specifically dimethylates two adjacent adenosines (A1518 and A1519) in the loop of a conserved hairpin near the 3'-end of 16S rRNA in the 30S particle. May play a critical role in biogenesis of 30S subunits. The protein is Ribosomal RNA small subunit methyltransferase A of Rickettsia bellii (strain OSU 85-389).